Consider the following 445-residue polypeptide: Histamine H3 receptor (445 aa).

Residues 1–39 (MERAPPDGPLNASGALAGEAAAAGGARGFSAAWTAVLAA) are Extracellular-facing. N11 carries N-linked (GlcNAc...) asparagine glycosylation. The helical transmembrane segment at 40-60 (LMALLIVATVLGNALVMLAFV) threads the bilayer. Residues 61-70 (ADSSLRTQNN) lie on the Cytoplasmic side of the membrane. A helical transmembrane segment spans residues 71–91 (FFLLNLAISDFLVGAFCIPLY). Residues 92-108 (VPYVLTGRWTFGRGLCK) are Extracellular-facing. The cysteines at positions 107 and 188 are disulfide-linked. Residues 109-129 (LWLVVDYLLCTSSAFNIVLIS) form a helical membrane-spanning segment. Topologically, residues 130–156 (YDRFLSVTRAVSYRAQQGDTRRAVRKM) are cytoplasmic. The helical transmembrane segment at 157-177 (LLVWVLAFLLYGPAILSWEYL) threads the bilayer. The Extracellular segment spans residues 178–196 (SGGSSIPEGHCYAEFFYNW). A helical transmembrane segment spans residues 197-217 (YFLITASTLEFFTPFLSVTFF). Residues 218–359 (NLSIYLNIQR…LSRDRKVAKS (142 aa)) are Cytoplasmic-facing. Disordered regions lie at residues 237-260 (REAA…GCWG) and 288-336 (EATL…LEKR). Positions 242–257 (PEPPPEAQPSPPPPPG) are enriched in pro residues. Gly residues predominate over residues 290-299 (TLGGGGGGGS). The span at 300 to 312 (VASPTSSSGSSSR) shows a compositional bias: low complexity. A helical membrane pass occupies residues 360 to 380 (LAVIVSIFGLCWAPYTLLMII). The Extracellular portion of the chain corresponds to 381-395 (RAACHGHCVPDYWYE). A helical transmembrane segment spans residues 396–416 (TSFWLLWANSAVNPVLYPLCH). At 417-445 (HSFRRAFTKLLCPQKLKIQPHSSLEHCWK) the chain is on the cytoplasmic side. S439 carries the post-translational modification Phosphoserine.

It belongs to the G-protein coupled receptor 1 family. In terms of tissue distribution, expressed predominantly in the CNS, with the greatest expression in the thalamus and caudate nucleus. The various isoforms are mainly coexpressed in brain, but their relative expression level varies in a region-specific manner. Isoform 3 and isoform 7 are highly expressed in the thalamus, caudate nucleus and cerebellum while isoform 5 and isoform 6 show a poor expression. Isoform 5 and isoform 6 show a high expression in the amygdala, substantia nigra, cerebral cortex and hypothalamus. Isoform 7 is not found in hypothalamus or substantia nigra.

The protein resides in the cell membrane. In terms of biological role, the H3 subclass of histamine receptors could mediate the histamine signals in CNS and peripheral nervous system. Signals through the inhibition of adenylate cyclase and displays high constitutive activity (spontaneous activity in the absence of agonist). Agonist stimulation of isoform 3 neither modified adenylate cyclase activity nor induced intracellular calcium mobilization. This is Histamine H3 receptor (HRH3) from Homo sapiens (Human).